The following is a 377-amino-acid chain: MSNPILSWRRVRALCVKETRQIVRDPSSWLIAVVIPLLLLFIFGYGINLDSSKLRVGILLEQRSEAALDFTHTMTGSPYIDATISDNRQELIAKMQAGKIRGLVVIPVDFAEQMERANATAPIQVITDGSEPNTANFVQGYVEGIWQIWQMQRAEDNGQTFEPLIDVQTRYWFNPAAISQHFIIPGAVTIIMTVIGAILTSLVVAREWERGTMEALLSTEITRTELLLCKLIPYYFLGMLAMLLCMLVSVFILGVPYRGSLLILFFISSLFLLSTLGMGLLISTITRNQFNAAQVALNAAFLPSIMLSGFIFQIDSMPAVIRAVTYIIPARYFVSTLQSLFLAGNIPVVLVVNVLFLIASAVMFIGLTWLKTKRRLD.

The Cytoplasmic portion of the chain corresponds to 1–28; it reads MSNPILSWRRVRALCVKETRQIVRDPSS. A helical transmembrane segment spans residues 29–49; that stretch reads WLIAVVIPLLLLFIFGYGINL. Residues 50–181 are Periplasmic-facing; sequence DSSKLRVGIL…WFNPAAISQH (132 aa). The region spanning 145 to 375 is the ABC transmembrane type-2 domain; sequence IWQIWQMQRA…GLTWLKTKRR (231 aa). Residues 182 to 202 form a helical membrane-spanning segment; that stretch reads FIIPGAVTIIMTVIGAILTSL. Residues 203–234 lie on the Cytoplasmic side of the membrane; it reads VVAREWERGTMEALLSTEITRTELLLCKLIPY. The helical transmembrane segment at 235–255 threads the bilayer; it reads YFLGMLAMLLCMLVSVFILGV. The Periplasmic segment spans residues 256 to 261; it reads PYRGSL. Residues 262–282 traverse the membrane as a helical segment; the sequence is LILFFISSLFLLSTLGMGLLI. Topologically, residues 283 to 291 are cytoplasmic; that stretch reads STITRNQFN. A helical membrane pass occupies residues 292–312; that stretch reads AAQVALNAAFLPSIMLSGFIF. Over 313–345 the chain is Periplasmic; the sequence is QIDSMPAVIRAVTYIIPARYFVSTLQSLFLAGN. Residues 346-366 form a helical membrane-spanning segment; sequence IPVVLVVNVLFLIASAVMFIG. Topologically, residues 367-377 are cytoplasmic; it reads LTWLKTKRRLD.

It belongs to the ABC-2 integral membrane protein family. As to quaternary structure, the complex is probably composed of two ATP-binding proteins (YbhF) and two transmembrane proteins (YbhR and YbhS).

It localises to the cell inner membrane. Functionally, part of the ABC transporter complex YbhFSR that could be involved in efflux of cefoperazone. Probably involved in the translocation of the substrate across the membrane. This chain is Probable multidrug ABC transporter permease YbhS (ybhS), found in Escherichia coli O157:H7.